A 143-amino-acid polypeptide reads, in one-letter code: MLSPRRTKFRKHHRGRMKGLAARGNQISFGDFALRALEPAWITSRQIESGRRAMTRYAKRGGKIWIRIFPDKPVTMRPAETRMGSGKGSPEYWVAVVKPGKILYEMKGVSETVARAAMRIASYKMPIKTQFITRIETKAPIVE.

It belongs to the universal ribosomal protein uL16 family. Part of the 50S ribosomal subunit.

It is found in the plastid. It localises to the chloroplast. The chain is Large ribosomal subunit protein uL16c from Chlorokybus atmophyticus (Soil alga).